A 409-amino-acid chain; its full sequence is Accessory Sec system protein translocase subunit SecY2 (409 aa).

A run of 10 helical transmembrane segments spans residues Ile-16–Gly-36, Leu-61–Leu-81, Val-104–His-124, Leu-132–Leu-152, Met-161–Phe-181, Leu-190–Glu-210, Gly-242–Leu-262, Gly-286–Ile-306, Leu-341–Ala-361, and Thr-374–Ile-394.

This sequence belongs to the SecY/SEC61-alpha family. SecY2 subfamily. As to quaternary structure, component of the accessory SecA2/SecY2 protein translocase complex required to export cell wall proteins. May form heterotrimers with SecE and SecG subunits.

It is found in the cell membrane. Its function is as follows. Part of the accessory SecA2/SecY2 system specifically required for export of possible cell wall proteins. The central subunit of a protein translocation channel. This Streptococcus agalactiae serotype III (strain NEM316) protein is Accessory Sec system protein translocase subunit SecY2.